Consider the following 347-residue polypeptide: tRNA N6-adenosine threonylcarbamoyltransferase (347 aa).

Fe cation-binding residues include His-117 and His-121. Substrate is bound by residues 140 to 144, Asp-173, Gly-186, and Asn-280; that span reads LVSGG. Position 308 (Asp-308) interacts with Fe cation.

This sequence belongs to the KAE1 / TsaD family. Fe(2+) serves as cofactor.

Its subcellular location is the cytoplasm. It carries out the reaction L-threonylcarbamoyladenylate + adenosine(37) in tRNA = N(6)-L-threonylcarbamoyladenosine(37) in tRNA + AMP + H(+). In terms of biological role, required for the formation of a threonylcarbamoyl group on adenosine at position 37 (t(6)A37) in tRNAs that read codons beginning with adenine. Is involved in the transfer of the threonylcarbamoyl moiety of threonylcarbamoyl-AMP (TC-AMP) to the N6 group of A37, together with TsaE and TsaB. TsaD likely plays a direct catalytic role in this reaction. This chain is tRNA N6-adenosine threonylcarbamoyltransferase, found in Psychrobacter sp. (strain PRwf-1).